The primary structure comprises 494 residues: NADH-quinone oxidoreductase subunit N 2 (494 aa).

14 consecutive transmembrane segments (helical) span residues 14–34 (LPQIALTVAAFFVLACDGMLL), 45–65 (IAMLLSVAGSLVALALLPLTA), 82–102 (VVQVVLLLFTLAVTLLSGSVL), 116–136 (IGEFFALLLFATVAALFLVST), 139–159 (LLLIFLAVEFLSLVLYILTAF), 174–194 (FLFGGMSAGFLLFGISLLYGV), 214–234 (LLVAIVLVILGFGFKIAAAPF), 262–282 (FFVFAQVLFIGVASASGNAAW), 289–309 (WMPILAAVAVLSMLLGNLAAL), 317–337 (LLAYSAIGHAGYLLLGLIAHT), 344–364 (LLYYVFTYALAVLGAFGVLAI), 388–408 (ACLLVFLLSLAGIPPLVGFFA), 422–442 (AFGLLWLVILAILMSVVALFY), and 470–490 (ITLLVMAALTLLLGCAPNLLM).

Belongs to the complex I subunit 2 family. As to quaternary structure, NDH-1 is composed of 14 different subunits. Subunits NuoA, H, J, K, L, M, N constitute the membrane sector of the complex.

Its subcellular location is the cell inner membrane. The enzyme catalyses a quinone + NADH + 5 H(+)(in) = a quinol + NAD(+) + 4 H(+)(out). Its function is as follows. NDH-1 shuttles electrons from NADH, via FMN and iron-sulfur (Fe-S) centers, to quinones in the respiratory chain. The immediate electron acceptor for the enzyme in this species is believed to be ubiquinone. Couples the redox reaction to proton translocation (for every two electrons transferred, four hydrogen ions are translocated across the cytoplasmic membrane), and thus conserves the redox energy in a proton gradient. This is NADH-quinone oxidoreductase subunit N 2 from Acidobacterium capsulatum (strain ATCC 51196 / DSM 11244 / BCRC 80197 / JCM 7670 / NBRC 15755 / NCIMB 13165 / 161).